The sequence spans 395 residues: GA-binding protein subunit beta-1 (395 aa).

Ser-2 carries the post-translational modification N-acetylserine. ANK repeat units follow at residues 5–34 and 37–66; these read DLGK…PFTT and LGTS…SRDA. Position 69 is an N6-acetyllysine (Lys-69). ANK repeat units lie at residues 70-99, 103-132, and 136-166; these read VDRT…DVNA, LKMT…DVHT, and FCKT…QINT. The tract at residues 258-327 is transcription activation and HCFC1 interaction; it reads DGAIQQVVSS…ETVISEEPPA (70 aa). N6-acetyllysine is present on residues Lys-352 and Lys-381.

As to quaternary structure, heterotetramer of two alpha and two beta subunits. Interacts with HCFC1, causing repression of transcriptional activity. In terms of processing, acetylated by EP300/p300. Deacetylated by SIRT7, promoting heterotetramerization and activity.

Its subcellular location is the nucleus. In terms of biological role, transcription factor capable of interacting with purine rich repeats (GA repeats). Acts as a master regulator of nuclear-encoded mitochondrial genes. Its function is as follows. (Microbial infection) Necessary for the expression of the Adenovirus E4 gene. This chain is GA-binding protein subunit beta-1 (GABPB1), found in Homo sapiens (Human).